Consider the following 300-residue polypeptide: Ribosomal protein L11 methyltransferase (300 aa).

S-adenosyl-L-methionine-binding residues include threonine 144, glycine 165, aspartate 187, and asparagine 235.

It belongs to the methyltransferase superfamily. PrmA family.

Its subcellular location is the cytoplasm. The catalysed reaction is L-lysyl-[protein] + 3 S-adenosyl-L-methionine = N(6),N(6),N(6)-trimethyl-L-lysyl-[protein] + 3 S-adenosyl-L-homocysteine + 3 H(+). Its function is as follows. Methylates ribosomal protein L11. The chain is Ribosomal protein L11 methyltransferase from Prochlorococcus marinus (strain MIT 9515).